A 108-amino-acid polypeptide reads, in one-letter code: UPF0060 membrane protein Mfla_0485 (108 aa).

Transmembrane regions (helical) follow at residues 7 to 27 (FSLFILTALAEILGCYLPYLW), 33 to 53 (SVWLLLPAAISLAVFAWLLSL), 63 to 83 (AAYGGVYIFVALGWLWLVDGI), and 87 to 107 (TWDFVGVGVALAGMAIIMFAP).

This sequence belongs to the UPF0060 family.

It is found in the cell inner membrane. This is UPF0060 membrane protein Mfla_0485 from Methylobacillus flagellatus (strain ATCC 51484 / DSM 6875 / VKM B-1610 / KT).